The sequence spans 87 residues: Large ribosomal subunit protein uL23c (87 aa).

This sequence belongs to the universal ribosomal protein uL23 family. As to quaternary structure, part of the 50S ribosomal subunit.

Its subcellular location is the plastid. The protein resides in the chloroplast. Its function is as follows. Binds to 23S rRNA. This chain is Large ribosomal subunit protein uL23c (rpl23), found in Ostreococcus tauri.